The primary structure comprises 230 residues: uncharacterized protein (230 aa).

Residues 93–115 (VFLYYFLIVYTSGNVDLISRFLF) form a helical membrane-spanning segment.

This sequence belongs to the DUP/COS family.

It is found in the membrane. This is an uncharacterized protein from Saccharomyces cerevisiae (strain ATCC 204508 / S288c) (Baker's yeast).